The primary structure comprises 396 residues: Elongation factor Tu (396 aa).

The tr-type G domain occupies 10–205; sequence KPHVNVGTIG…AVDEYIPTPE (196 aa). Residues 19–26 are G1; that stretch reads GHVDHGKT. 19–26 contributes to the GTP binding site; sequence GHVDHGKT. Residue Thr26 coordinates Mg(2+). Residues 61–65 are G2; it reads GITIA. The G3 stretch occupies residues 82–85; sequence DCPG. GTP contacts are provided by residues 82–86 and 137–140; these read DCPGH and NKTD. The tract at residues 137-140 is G4; that stretch reads NKTD. A G5 region spans residues 175–177; it reads SAL.

This sequence belongs to the TRAFAC class translation factor GTPase superfamily. Classic translation factor GTPase family. EF-Tu/EF-1A subfamily. As to quaternary structure, monomer.

Its subcellular location is the cytoplasm. It catalyses the reaction GTP + H2O = GDP + phosphate + H(+). Functionally, GTP hydrolase that promotes the GTP-dependent binding of aminoacyl-tRNA to the A-site of ribosomes during protein biosynthesis. The sequence is that of Elongation factor Tu from Salinibacter ruber (strain DSM 13855 / M31).